We begin with the raw amino-acid sequence, 684 residues long: MDLPTTVVRKYWTFTNPNRILHQSVNQTFDVRQFVFDNARLVNCVDGDGKVLHLNKGWLCATIMQHGEASAGAKTQQGFMSIDITGDGELQEHLFVRGGIVFNKSVSSVVGSSGPNESALLTMISENGNLQVTYVRHYLKNHGESSGGGGGCGAASTASAVCVSSLGGSGGTRDGPSAEEQQRRRQEQRHEERRKKSSSSAGGGGGGGASGGGGGGGSGGQHSSDSANGLLRDPRLMNRQKERRPPPSSENDGSPPLREAKRQKTTAQHEGHGGGGKNETEQQSGGAGGGGGGGSGRMSLPLDTSEAVAFLNYSSSSSAVSSSSNNHHHHHHHHNAVTDVAAGTDGALLLPIERGAVVSSPSSTSPSSLLSLPRPSSAHSAGETVQESEAAATAAAAGLMMMRRMRRAPAEAAEAPPQSEEENDSTTPVSNCRVPPNSQESAAPQPPRSPRFDDIIQSLTKMLNDCKEKRLCDLPLVSSRLLPETSGGTVVVNHSSVARTAAAVSTAGVGPPAVACPPLVTTGVVPSGSVAGVAPVAAAVETPAAPPRPVCEIKPYVVNPVVATAAAASNSSSSSSAPLPPPPPPPGGRRGRARNNTRGGGGGGGGGRNSRRQAASSSSSSSRRSRRRNNRHEDEDNDPLLRLSQVAGSGRRRGPSFLEDGLEIIDPSEEAAIAAASIAAFFDD.

Disordered stretches follow at residues 166 to 301, 317 to 336, 357 to 393, 407 to 452, and 569 to 657; these read LGGS…MSLP, SSAV…HHNA, VVSS…AAAT, RAPA…SPRF, and SNSS…GPSF. A compositionally biased stretch (basic and acidic residues) spans 180–191; that stretch reads EQQRRRQEQRHE. Gly residues predominate over residues 201–220; sequence AGGGGGGGASGGGGGGGSGG. Composition is skewed to basic and acidic residues over residues 232–245 and 258–272; these read RDPR…ERRP and REAK…HEGH. Positions 261–264 match the Nuclear localization signal motif; it reads KRQK. A compositionally biased stretch (gly residues) spans 285-296; that stretch reads GGAGGGGGGGSG. A compositionally biased stretch (basic residues) spans 326 to 335; that stretch reads NHHHHHHHHN. Positions 359–377 are enriched in low complexity; that stretch reads SSPSSTSPSSLLSLPRPSS. Residues 425–442 are compositionally biased toward polar residues; that stretch reads STTPVSNCRVPPNSQESA. Residues 578 to 587 show a composition bias toward pro residues; the sequence is PLPPPPPPPG. Gly residues predominate over residues 598–608; it reads RGGGGGGGGGR. The span at 612–622 shows a compositional bias: low complexity; that stretch reads RQAASSSSSSS.

This sequence belongs to the herpesviridae U79/UL112 family. In terms of assembly, isoforms 1, 2, 3 and 4 interacts with themselves and with each other via their shared N-terminal regions; these interactions are important to both their intranuclear targeting and the recruitment of UL44 to subnuclear sites for viral replication.

It is found in the host nucleus. It localises to the virion. Needed for efficient replication. Recruits the DNA polymerase processivity factor to pre-replication foci. The sequence is that of Early phosphoprotein p84 (UL112/UL113) from Homo sapiens (Human).